Consider the following 1288-residue polypeptide: VWFA and cache domain-containing protein 1 (1288 aa).

Positions Met1–Ala49 are cleaved as a signal peptide. Residues Asp50 to Pro1109 lie on the Extracellular side of the membrane. Asn159 is a glycosylation site (N-linked (GlcNAc...) asparagine). In terms of domain architecture, VWFA spans His242–Leu457. 2 consecutive Cache domains span residues Phe467 to Pro546 and Leu786 to Leu867. The chain crosses the membrane as a helical span at residues Val1110–Ala1130. At Tyr1131 to Cys1288 the chain is on the cytoplasmic side. Disordered stretches follow at residues Asn1157–Ile1176 and Glu1187–Gly1237. The span at Glu1159–Gly1174 shows a compositional bias: basic and acidic residues. Residues Gly1210–Pro1229 show a composition bias toward polar residues.

It belongs to the calcium channel subunit alpha-2/delta family.

It localises to the membrane. Its function is as follows. May regulate voltage-dependent calcium channels. The chain is VWFA and cache domain-containing protein 1 (Cachd1) from Mus musculus (Mouse).